Consider the following 561-residue polypeptide: Urocanate hydratase (561 aa).

Residues 52–53 (GG), glutamine 130, 176–178 (GMG), glutamate 196, arginine 201, 242–243 (NA), 263–267 (QTSAH), 273–274 (YL), and tyrosine 322 each bind NAD(+). Cysteine 410 is a catalytic residue. Glycine 492 contributes to the NAD(+) binding site.

Belongs to the urocanase family. NAD(+) is required as a cofactor.

Its subcellular location is the cytoplasm. It catalyses the reaction 4-imidazolone-5-propanoate = trans-urocanate + H2O. The protein operates within amino-acid degradation; L-histidine degradation into L-glutamate; N-formimidoyl-L-glutamate from L-histidine: step 2/3. Catalyzes the conversion of urocanate to 4-imidazolone-5-propionate. This Salmonella gallinarum (strain 287/91 / NCTC 13346) protein is Urocanate hydratase.